The sequence spans 156 residues: Ribosomal RNA large subunit methyltransferase H (156 aa).

Residues leucine 73, glycine 104, and 123–128 (LSDLTL) contribute to the S-adenosyl-L-methionine site.

The protein belongs to the RNA methyltransferase RlmH family. As to quaternary structure, homodimer.

The protein resides in the cytoplasm. The enzyme catalyses pseudouridine(1915) in 23S rRNA + S-adenosyl-L-methionine = N(3)-methylpseudouridine(1915) in 23S rRNA + S-adenosyl-L-homocysteine + H(+). Functionally, specifically methylates the pseudouridine at position 1915 (m3Psi1915) in 23S rRNA. The polypeptide is Ribosomal RNA large subunit methyltransferase H (Methylibium petroleiphilum (strain ATCC BAA-1232 / LMG 22953 / PM1)).